Reading from the N-terminus, the 177-residue chain is ATP synthase subunit delta (177 aa).

This sequence belongs to the ATPase delta chain family. F-type ATPases have 2 components, F(1) - the catalytic core - and F(0) - the membrane proton channel. F(1) has five subunits: alpha(3), beta(3), gamma(1), delta(1), epsilon(1). CF(0) has four main subunits: a(1), b(1), b'(1) and c(10-14). The alpha and beta chains form an alternating ring which encloses part of the gamma chain. F(1) is attached to F(0) by a central stalk formed by the gamma and epsilon chains, while a peripheral stalk is formed by the delta, b and b' chains.

Its subcellular location is the cell inner membrane. In terms of biological role, f(1)F(0) ATP synthase produces ATP from ADP in the presence of a proton or sodium gradient. F-type ATPases consist of two structural domains, F(1) containing the extramembraneous catalytic core and F(0) containing the membrane proton channel, linked together by a central stalk and a peripheral stalk. During catalysis, ATP synthesis in the catalytic domain of F(1) is coupled via a rotary mechanism of the central stalk subunits to proton translocation. Its function is as follows. This protein is part of the stalk that links CF(0) to CF(1). It either transmits conformational changes from CF(0) to CF(1) or is implicated in proton conduction. In Methylibium petroleiphilum (strain ATCC BAA-1232 / LMG 22953 / PM1), this protein is ATP synthase subunit delta.